We begin with the raw amino-acid sequence, 408 residues long: MTHPDPTLFGHDPWWLMLAKAVAIFVFLLLTVLSAILIERKLLGRMQMRFGPNRVGPAGLLQSLADGIKLALKEGLVPAGVDKPIYLLAPVISVIPAFVAFSVIPLGGAVSVFGHRTPLQLTDLPVAVLFILAATSIGVYGIVLAGWASGSTYPLLGGLRSSAQVVSYEIAMGLSFVAVFLYAGTMSTSGIVAAQDRTWFVFLLLPSFLVYVVSMVGETNRAPFDLPEAEGELVGGFHTEYSSLKFAMFMLAEYVNMTTVSALATTMFLGGWHAPFPFNLIDGANSGWWPLLWFTAKVWTFMFLYFWLRATLPRLRYDQFMALGWKVLIPVSLLWIMVVAITRSLRQHGEGTWAAWLLTAAVVVVVALIWGLATSLRRRTVQPPPPQSTGAYPVPPLPSVGTKETADA.

9 consecutive transmembrane segments (helical) span residues leucine 18–isoleucine 38, proline 84–isoleucine 104, leucine 124–leucine 144, valine 165–threonine 185, threonine 198–glutamate 218, serine 261–isoleucine 281, tryptophan 288–leucine 308, methionine 321–isoleucine 341, and tryptophan 353–alanine 373. The disordered stretch occupies residues valine 381–alanine 408. The span at glutamine 382–proline 398 shows a compositional bias: pro residues.

The protein belongs to the complex I subunit 1 family. NDH-1 is composed of 14 different subunits. Subunits NuoA, H, J, K, L, M, N constitute the membrane sector of the complex.

It is found in the cell membrane. The catalysed reaction is a quinone + NADH + 5 H(+)(in) = a quinol + NAD(+) + 4 H(+)(out). NDH-1 shuttles electrons from NADH, via FMN and iron-sulfur (Fe-S) centers, to quinones in the respiratory chain. The immediate electron acceptor for the enzyme in this species is believed to be menaquinone. Couples the redox reaction to proton translocation (for every two electrons transferred, four hydrogen ions are translocated across the cytoplasmic membrane), and thus conserves the redox energy in a proton gradient. This subunit may bind ubiquinone. This is NADH-quinone oxidoreductase subunit H from Mycolicibacterium smegmatis (strain ATCC 700084 / mc(2)155) (Mycobacterium smegmatis).